Here is a 749-residue protein sequence, read N- to C-terminus: 5-methyltetrahydropteroyltriglutamate--homocysteine methyltransferase (749 aa).

Residues 15-18 (RELK) and Lys-114 each bind 5-methyltetrahydropteroyltri-L-glutamate. L-homocysteine-binding positions include 425 to 427 (IGS) and Glu-478. Residues 425–427 (IGS) and Glu-478 each bind L-methionine. Residue Trp-555 participates in 5-methyltetrahydropteroyltri-L-glutamate binding. Asp-593 provides a ligand contact to L-homocysteine. L-methionine is bound at residue Asp-593. Residue Glu-599 participates in 5-methyltetrahydropteroyltri-L-glutamate binding. Zn(2+) contacts are provided by His-636, Cys-638, and Glu-660. His-689 (proton donor) is an active-site residue. Cys-721 contacts Zn(2+).

This sequence belongs to the vitamin-B12 independent methionine synthase family. Zn(2+) is required as a cofactor.

The catalysed reaction is 5-methyltetrahydropteroyltri-L-glutamate + L-homocysteine = tetrahydropteroyltri-L-glutamate + L-methionine. It functions in the pathway amino-acid biosynthesis; L-methionine biosynthesis via de novo pathway; L-methionine from L-homocysteine (MetE route): step 1/1. In terms of biological role, catalyzes the transfer of a methyl group from 5-methyltetrahydrofolate to homocysteine resulting in methionine formation. The protein is 5-methyltetrahydropteroyltriglutamate--homocysteine methyltransferase of Streptococcus thermophilus (strain ATCC BAA-491 / LMD-9).